Here is a 485-residue protein sequence, read N- to C-terminus: Glutamyl-tRNA(Gln) amidotransferase subunit A (485 aa).

Active-site charge relay system residues include K78 and S153. S177 acts as the Acyl-ester intermediate in catalysis.

This sequence belongs to the amidase family. GatA subfamily. As to quaternary structure, heterotrimer of A, B and C subunits.

It catalyses the reaction L-glutamyl-tRNA(Gln) + L-glutamine + ATP + H2O = L-glutaminyl-tRNA(Gln) + L-glutamate + ADP + phosphate + H(+). Its function is as follows. Allows the formation of correctly charged Gln-tRNA(Gln) through the transamidation of misacylated Glu-tRNA(Gln) in organisms which lack glutaminyl-tRNA synthetase. The reaction takes place in the presence of glutamine and ATP through an activated gamma-phospho-Glu-tRNA(Gln). This chain is Glutamyl-tRNA(Gln) amidotransferase subunit A, found in Desulfotalea psychrophila (strain LSv54 / DSM 12343).